Consider the following 238-residue polypeptide: Cysteine-rich venom protein pseudechetoxin-like (238 aa).

A signal peptide spans 1–19 (MIAFIVLLSLAAVLQQSSG). Positions 20–28 (TVDFASESS) are excised as a propeptide. The region spanning 38-164 (VDKHNDLRRS…STKYLYVCQY (127 aa)) is the SCP domain. 8 cysteine pairs are disulfide-bonded: Cys75–Cys153, Cys92–Cys165, Cys148–Cys162, Cys184–Cys191, Cys187–Cys196, Cys200–Cys233, Cys209–Cys227, and Cys218–Cys231. The 34-residue stretch at 200-233 (CKHNDDLSNCKPLAKKSKCQTEWIKSKCPATCFC) folds into the ShKT domain.

It belongs to the CRISP family. As to expression, expressed by the venom gland.

It localises to the secreted. Blocks olfactory (CNGA2) and retinal (CNGA1) CNG channel currents. Does not affect neither depolarization- nor caffeine-induced contraction of smooth muscle. The protein is Cysteine-rich venom protein pseudechetoxin-like of Oxyuranus microlepidotus (Inland taipan).